The sequence spans 1846 residues: MTRMNIVRCRRRHKILENLEEENLGPSCSSTTSTTAATEALGTTTEDMRLKQQRSSSRATEHDIVDGNHHDDEHITMRRLRLVKNSRTRRRTTPDSSMDCYEENPPSQKTSINYSWISKKSSMTSLMLLLLFAFVQPCASIVEKRCGPIDIRNRPWDIKPQWSKLGDPNEKDLAGQRMVNCTVVEGSLTISFVLKHKTKAQEEMHRSLQPRYSQDEFITFPHLREITGTLLVFETEGLVDLRKIFPNLRVIGGRSLIQHYALIIYRNPDLEIGLDKLSVIRNGGVRIIDNRKLCYTKTIDWKHLITSSINDVVVDNAAEYAVTETGLMCPRGACEEDKGESKCHYLEEKNQEQGVERVQSCWSNTTCQKSCAYDRLLPTKEIGPGCDANGDRCHDQCVGGCERVNDATACHACKNVYHKGKCIEKCDAHLYLLLQRRCVTREQCLQLNPVLSNKTVPIKATAGLCSDKCPDGYQINPDDHRECRKCVGKCEIVCEINHVIDTFPKAQAIRLCNIIDGNLTIEIRGKQDSGMASELKDIFANIHTITGYLLVRQSSPFISLNMFRNLRRIEAKSLFRNLYAITVFENPNLKKLFDSTTDLTLDRGTVSIANNKMLCFKYIKQLMSKLNIPLDPIDQSEGTNGEKAICEDMAINVSITAVNADSVFFSWPSFNITDIDQRKFLGYELFFKEVPRIDENMTIEEDRSACVDSWQSVFKQYYETSNGEPTPDIFMDIGPRERIRPNTLYAYYVATQMVLHAGAKNGVSKIGFVRTSYYTPDPPTLALAQVDSDAIHITWEAPLQPNGDLTHYTIMWRENEVSPYEEAEKFCTDASTPANRQHTKDPKETIVADKPVDIPSSRTVAPTLLTMMGHEDQQKTCAATPGCCSCSAIEESSEQNKKKRPDPMSAIESSAFENKLLDEVLMPRDTMRVRRSIEDANRVSEELEKAENLGKAPKTLGGKKPLIHISKKKPSSSSTTSTPAPTIASMYALTRKPTTVPGTRIRLYEIYEPLPGSWAINVSALALDNSYVIRNLKHYTLYAISLSACQNMTVPGASCSISHRAGALKRTKHITDIDKVLNETIEWRFMNNSQQVNVTWDPPTEVNGGIFGYVVKLKSKVDGSIVMTRCVGAKRGYSTRNQGVLFQNLADGRYFVSVTATSVHGAGPEAESSDPIVVMTPGFFTVEIILGMLLVFLILMSIAGCIIYYYIQVRYGKKVKALSDFMQLNPEYCVDNKYNADDWELRQDDVVLGQQCGEGSFGKVYLGTGNNVVSLMGDRFGPCAIKINVDDPASTENLNYLMEANIMKNFKTNFIVKLYGVISTVQPAMVVMEMMDLGNLRDYLRSKREDEVFNETDCNFFDIIPRDKFHEWAAQICDGMAYLESLKFCHRDLAARNCMINRDETVKIGDFGMARDLFYHDYYKPSGKRMMPVRWMSPESLKDGKFDSKSDVWSFGVVLYEMVTLGAQPYIGLSNDEVLNYIGMARKVIKKPECCENYWYKVMKMCWRYSPRDRPTFLQLVHLLAAEASPEFRDLSFVLTDNQMILDDSEALDLDDIDDTDMNDQVVEVAPDVENVEVQSDSERRNTDSIPLKQFKTIPPINATTSHSTISIDETPMKAKQREGSLDEEYALMNHSGGPSDAEVRTYAGDGDYVERDVRENDVPTRRNTGASTSSYTGGGPYCLTNRGGSNERGAGFGEAVRLTDGVGSGHLNDDDYVEKEISSMDTRRSTGASSSSYGVPQTNWSGNRGATYYTSKAQQAATAAAAAAAALQQQQNGGRGDRLTQLPGTGHLQSTRGGQDGDYIETEPKNYRNNGSPSRNGNSRDIFNGRSAFGENEHLIEDNEHHPLV.

N-linked (GlcNAc...) asparagine glycans are attached at residues N113, N180, and N364. Cystine bridges form between C371-C386, C393-C401, C397-C410, C413-C422, and C426-C438. The N-linked (GlcNAc...) asparagine glycan is linked to N453. 2 cysteine pairs are disulfide-bonded: C469/C483 and C486/C490. N-linked (GlcNAc...) asparagine glycosylation occurs at N518. A disulfide bond links C615 and C646. 3 N-linked (GlcNAc...) asparagine glycosylation sites follow: N652, N671, and N696. Fibronectin type-III domains are found at residues 775–869 (TPDP…TMMG), 969–1067 (KPSS…LKRT), and 1077–1179 (LNET…TPGF). A disordered region spans residues 944–980 (EKAENLGKAPKTLGGKKPLIHISKKKPSSSSTTSTPA). The span at 961–970 (PLIHISKKKP) shows a compositional bias: basic residues. Over 970–1183 (PSSSSTTSTP…VMTPGFFTVE (214 aa)) the chain is Extracellular. Over residues 971–980 (SSSSTTSTPA) the composition is skewed to low complexity. N-linked (GlcNAc...) asparagine glycosylation is found at N1017, N1047, N1078, N1087, and N1093. A helical membrane pass occupies residues 1184-1204 (IILGMLLVFLILMSIAGCIIY). Topologically, residues 1205-1846 (YYIQVRYGKK…IEDNEHHPLV (642 aa)) are cytoplasmic. Positions 1246–1528 (VVLGQQCGEG…LLAAEASPEF (283 aa)) constitute a Protein kinase domain. ATP is bound by residues 1252–1260 (CGEGSFGKV) and K1282. The Proton acceptor role is filled by D1388. 2 disordered regions span residues 1718-1742 (ISSM…TNWS) and 1769-1826 (QQQQ…IFNG). Positions 1726–1742 (STGASSSSYGVPQTNWS) are enriched in polar residues. Residues 1808 to 1821 (YRNNGSPSRNGNSR) are compositionally biased toward low complexity.

This sequence belongs to the protein kinase superfamily. Tyr protein kinase family. Insulin receptor subfamily. As to quaternary structure, tetramer of 2 alpha and 2 beta chains linked by disulfide bonds. The alpha chains contribute to the formation of the ligand-binding domain, while the beta chains carry the kinase domain. Interacts (via cytoplasmic domain) with shc-1 (PID domain). Interacts (via kinase domain) with daf-18 (via C-terminus). In terms of assembly, interacts with casy-1; promoting axonal localization. Requires Mg(2+) as cofactor.

The protein resides in the membrane. The protein localises to the cell projection. It is found in the axon. It carries out the reaction L-tyrosyl-[protein] + ATP = O-phospho-L-tyrosyl-[protein] + ADP + H(+). Its activity is regulated as follows. Autophosphorylation activates the kinase activity. Interaction with shc-1 may inhibit its activity. Its function is as follows. Insulin receptor-like tyrosine kinase which regulates metabolism, controls longevity and prevents developmental arrest at the dauer stage. Binding of INS family members may either stimulate, or antagonize, association of the receptor with downstream mediators such as pdk-1 and age-1. Required for germline progenitor proliferation during larval development. Plays a role in maintaining gonad integrity in a daf-16/FOXO-dependent manner. Required for the response to environmental stimuli such as light, food, pheromone, and temperature. Negatively regulates resistance to UV and oxidative stress. In a daf-16/FOXO-dependent manner, plays a role in regulating the response to white light. Role in immune function and pathogen resistance. Negatively regulates autophagy. Regulates daf-18/PTEN protein levels. Plays a role in controlling seam cell development during the larval stages. Functionally, required for taste avoidance learning in the cell body of ASER gustatory neurons. Required for taste avoidance learning in axons of ASER gustatory neurons. The polypeptide is Insulin-like receptor (Caenorhabditis elegans).